A 95-amino-acid polypeptide reads, in one-letter code: Glutamyl-tRNA(Gln) amidotransferase subunit C (95 aa).

This sequence belongs to the GatC family. Heterotrimer of A, B and C subunits.

The catalysed reaction is L-glutamyl-tRNA(Gln) + L-glutamine + ATP + H2O = L-glutaminyl-tRNA(Gln) + L-glutamate + ADP + phosphate + H(+). It carries out the reaction L-aspartyl-tRNA(Asn) + L-glutamine + ATP + H2O = L-asparaginyl-tRNA(Asn) + L-glutamate + ADP + phosphate + 2 H(+). Its function is as follows. Allows the formation of correctly charged Asn-tRNA(Asn) or Gln-tRNA(Gln) through the transamidation of misacylated Asp-tRNA(Asn) or Glu-tRNA(Gln) in organisms which lack either or both of asparaginyl-tRNA or glutaminyl-tRNA synthetases. The reaction takes place in the presence of glutamine and ATP through an activated phospho-Asp-tRNA(Asn) or phospho-Glu-tRNA(Gln). The chain is Glutamyl-tRNA(Gln) amidotransferase subunit C from Caulobacter vibrioides (strain ATCC 19089 / CIP 103742 / CB 15) (Caulobacter crescentus).